The primary structure comprises 120 residues: Fumarate reductase subunit D (120 aa).

A run of 3 helical transmembrane segments spans residues F25 to I45, V55 to P75, and I100 to I120.

It belongs to the FrdD family. In terms of assembly, part of an enzyme complex containing four subunits: a flavoprotein (FrdA), an iron-sulfur protein (FrdB), and two hydrophobic anchor proteins (FrdC and FrdD).

It localises to the cell inner membrane. Its function is as follows. Anchors the catalytic components of the fumarate reductase complex to the cell membrane, binds quinones. This chain is Fumarate reductase subunit D, found in Aliivibrio salmonicida (strain LFI1238) (Vibrio salmonicida (strain LFI1238)).